The primary structure comprises 1329 residues: GRB10-interacting GYF protein 2 (1329 aa).

2 disordered regions span residues 109–184 and 236–419; these read RGGG…AHFP and NERW…RTTL. Basic and acidic residues-rich tracts occupy residues 150-177 and 251-271; these read GGRE…KDPD and GWRE…ERSG. The span at 293-302 shows a compositional bias: acidic residues; that stretch reads CLEDAEEETG. Residues 316-338 show a composition bias toward basic and acidic residues; sequence RALEKAPKEPILEEAELDFRPLE. Acidic residues predominate over residues 339-351; the sequence is ENDEYAEKDDSET. The segment covering 352–376 has biased composition (basic and acidic residues); the sequence is EQTKDTDTNTRHESDRNEENCKSEE. Residues 377–397 show a composition bias toward low complexity; it reads PSPVAVPFSAVVTPPKATTPA. A compositionally biased stretch (basic and acidic residues) spans 403-415; it reads HLEKAEDKERPSE. The GYF domain maps to 556-604; that stretch reads AFKWFYKDPQGEIQGPFNNQEMSEWFQAGYFTMTLQVKRGCDEMFQPLG. Residues 720–732 show a composition bias toward polar residues; the sequence is QNPSTQASCSPNM. Disordered regions lie at residues 720–740, 781–1081, 1122–1155, 1236–1256, and 1279–1302; these read QNPS…PSTW, LRAK…QNRA, EAAP…SKKV, AKQN…QQES, and QQQQ…MVRA. The segment covering 781–896 has biased composition (basic and acidic residues); that stretch reads LRAKREEEER…RREEEKRLEE (116 aa). Residues 899-908 are compositionally biased toward low complexity; sequence AAAAAALLRQ. A compositionally biased stretch (basic and acidic residues) spans 909–928; it reads QQEEQKKREQEAQRQQELQR. Residues 929–951 are compositionally biased toward low complexity; that stretch reads QRQQQQEALRRLQQQQQQQQLAQ. Over residues 954-966 the composition is skewed to polar residues; the sequence is LPSSSKWGQQSTT. Residues 967–980 show a composition bias toward low complexity; the sequence is ANSLSQSQNALSLA. Basic and acidic residues predominate over residues 983–1001; the sequence is QKLEEERERQTREEQRRQQ. The segment covering 1002-1013 has biased composition (low complexity); it reads QELQRVQQQQPQ. Basic and acidic residues predominate over residues 1035 to 1049; the sequence is IQREEAQQMKQRKDQ. Polar residues predominate over residues 1068 to 1081; it reads HSTNTQQNRTQNRA. The span at 1239-1254 shows a compositional bias: low complexity; that stretch reads NDNQQKPQQGQQQKQQ.

This sequence belongs to the GIGYF family. In terms of assembly, component of the 4EHP-GYF2 complex.

In terms of biological role, key component of the 4EHP-GYF2 complex, a multiprotein complex that acts as a repressor of translation initiation. In association with EIF4E2, assists ribosome-associated quality control (RQC) by sequestering the mRNA cap, blocking ribosome initiation and decreasing the translational load on problematic messages. The sequence is that of GRB10-interacting GYF protein 2 (gigyf2) from Danio rerio (Zebrafish).